Here is a 311-residue protein sequence, read N- to C-terminus: Pyrimidine-specific ribonucleoside hydrolase RihA (311 aa).

The active site involves H240.

This sequence belongs to the IUNH family. RihA subfamily.

Functionally, hydrolyzes with equal efficiency cytidine or uridine to ribose and cytosine or uracil, respectively. The polypeptide is Pyrimidine-specific ribonucleoside hydrolase RihA (Escherichia coli O7:K1 (strain IAI39 / ExPEC)).